A 459-amino-acid chain; its full sequence is Cysteine--tRNA ligase (459 aa).

C28 provides a ligand contact to Zn(2+). The 'HIGH' region motif lies at 30-40 (VTIYDLCHIGH). The Zn(2+) site is built by C209, H234, and E238. The short motif at 266–270 (KMSKS) is the 'KMSKS' region element. K269 is an ATP binding site.

It belongs to the class-I aminoacyl-tRNA synthetase family. As to quaternary structure, monomer. Zn(2+) is required as a cofactor.

It localises to the cytoplasm. It catalyses the reaction tRNA(Cys) + L-cysteine + ATP = L-cysteinyl-tRNA(Cys) + AMP + diphosphate. In Shewanella piezotolerans (strain WP3 / JCM 13877), this protein is Cysteine--tRNA ligase.